The following is a 452-amino-acid chain: Trigger factor (452 aa).

Positions 171–256 (GDRVTVSFKG…ATKLEAPQET (86 aa)) constitute a PPIase FKBP-type domain.

The protein belongs to the FKBP-type PPIase family. Tig subfamily.

Its subcellular location is the cytoplasm. The catalysed reaction is [protein]-peptidylproline (omega=180) = [protein]-peptidylproline (omega=0). Functionally, involved in protein export. Acts as a chaperone by maintaining the newly synthesized protein in an open conformation. Functions as a peptidyl-prolyl cis-trans isomerase. The chain is Trigger factor from Rhodopseudomonas palustris (strain ATCC BAA-98 / CGA009).